We begin with the raw amino-acid sequence, 142 residues long: Large ribosomal subunit protein uL13 (142 aa).

Belongs to the universal ribosomal protein uL13 family. In terms of assembly, part of the 50S ribosomal subunit.

Its function is as follows. This protein is one of the early assembly proteins of the 50S ribosomal subunit, although it is not seen to bind rRNA by itself. It is important during the early stages of 50S assembly. In Ralstonia nicotianae (strain ATCC BAA-1114 / GMI1000) (Ralstonia solanacearum), this protein is Large ribosomal subunit protein uL13.